A 97-amino-acid chain; its full sequence is MKRICSIYKSPRKNEMYLYVLKADALTRVPEGLLGIFGPPAHAFDLVLSPERQLAREDIATVLENLDKQGYHLQMPPPEEDYIQHLPDELLCRNDPV.

One can recognise a YcgL domain in the interval 3–87 (RICSIYKSPR…PEEDYIQHLP (85 aa)).

This Ectopseudomonas mendocina (strain ymp) (Pseudomonas mendocina) protein is YcgL domain-containing protein Pmen_1774.